The sequence spans 131 residues: Small ribosomal subunit protein uS8 (131 aa).

Belongs to the universal ribosomal protein uS8 family. As to quaternary structure, part of the 30S ribosomal subunit. Contacts proteins S5 and S12.

One of the primary rRNA binding proteins, it binds directly to 16S rRNA central domain where it helps coordinate assembly of the platform of the 30S subunit. This Campylobacter jejuni subsp. doylei (strain ATCC BAA-1458 / RM4099 / 269.97) protein is Small ribosomal subunit protein uS8.